The following is a 139-amino-acid chain: Translation initiation factor 2 subunit beta (139 aa).

It belongs to the eIF-2-beta/eIF-5 family. Heterotrimer composed of an alpha, a beta and a gamma chain.

Its function is as follows. eIF-2 functions in the early steps of protein synthesis by forming a ternary complex with GTP and initiator tRNA. The protein is Translation initiation factor 2 subunit beta of Nanoarchaeum equitans (strain Kin4-M).